Reading from the N-terminus, the 112-residue chain is MAVPQFHRPSTVTTDSVRALGMRGLVLATNNSQFIMDNNHPHPQGTQGAVREFLRGQAAALTDLGLAHANNTFTPQPMFAGDAPAAWLRPAFGLRRTYSPFVVREPSTPGTP.

It belongs to the herpesviridae small capsomere-interacting protein family. Interacts with the major capsid protein/MCP. Interacts with host TSPAN7; this interaction may be responsible for the presence of TSPAN7 in extracellular virions. Interacts with host MAPRE3 and DYNLT1; these interactions mediate retrograde transport of viral capsids.

The protein localises to the virion. It is found in the host nucleus. Participates in the assembly of the infectious particles by decorating the outer surface of the capsid shell and thus forming a layer between the capsid and the tegument. Complexes composed of the major capsid protein and small capsomere-interacting protein/SCP assemble together in the host cytoplasm and are translocated to the nucleus, where they accumulate and participate in capsid assembly. Interaction with host dynein light chains suggests a possible function in the retrogarde transport of incoming viral capsids. The polypeptide is Small capsomere-interacting protein (Human herpesvirus 1 (strain 17) (HHV-1)).